A 183-amino-acid chain; its full sequence is MFIFIKHGDNQQFLVNTNCAVVVLLYYIRSKVKLPKTNTIDLCEQTGKMKMLFLMKPNHAEYASKYLTARSTYYVCKVERGPPGTRLENAYRAFVPLLKNPEPWLLVALRIQCDALERRRIQMLKMKEAKKVVIIEPPASVPSKQSGRSDKKKSTRKSPTFRNRPDFRKNKGRQLNKTTKQKK.

Positions 136–183 (EPPASVPSKQSGRSDKKKSTRKSPTFRNRPDFRKNKGRQLNKTTKQKK) are disordered. Over residues 170-183 (NKGRQLNKTTKQKK) the composition is skewed to basic residues.

This is an uncharacterized protein from Homo sapiens (Human).